The primary structure comprises 322 residues: CRISPR-associated endonuclease Cas1 (322 aa).

Mn(2+) contacts are provided by glutamate 149, histidine 214, and glutamate 229.

It belongs to the CRISPR-associated endonuclease Cas1 family. As to quaternary structure, homodimer, forms a heterotetramer with a Cas2 homodimer. The cofactor is Mg(2+). Requires Mn(2+) as cofactor.

In terms of biological role, CRISPR (clustered regularly interspaced short palindromic repeat), is an adaptive immune system that provides protection against mobile genetic elements (viruses, transposable elements and conjugative plasmids). CRISPR clusters contain spacers, sequences complementary to antecedent mobile elements, and target invading nucleic acids. CRISPR clusters are transcribed and processed into CRISPR RNA (crRNA). Acts as a dsDNA endonuclease. Involved in the integration of spacer DNA into the CRISPR cassette. The chain is CRISPR-associated endonuclease Cas1 from Methanocaldococcus jannaschii (strain ATCC 43067 / DSM 2661 / JAL-1 / JCM 10045 / NBRC 100440) (Methanococcus jannaschii).